A 388-amino-acid chain; its full sequence is uncharacterized protein (388 aa).

Residues 68–96 (KVDRMSEEEERMAIATRKAKEVAKELSET) adopt a coiled-coil conformation. The disordered stretch occupies residues 162-388 (GSHPLVREFN…PPQQDWFDSV (227 aa)). Basic and acidic residues-rich tracts occupy residues 166 to 176 (LVREFNGEKPP) and 196 to 208 (ATDK…QSDK). Residues 233–251 (GVKHQHAIRRDDRHRHGMR) show a composition bias toward basic residues. Composition is skewed to low complexity over residues 265 to 279 (QQQQ…SRGQ) and 293 to 346 (QRRP…QRPA).

This is an uncharacterized protein from Frog virus 3 (isolate Goorha) (FV-3).